The chain runs to 252 residues: MRIDVISLFPEFIAQCAAFGVVGRAQERGLLELQGWNPRDHAQGNYRRVDDRPFGGGPGMVMLIEPLRACLEAAKAADARPAPVIYLSPQGRPLTQPLARELAQLPRMVLLCGRYEGVDERFLDQAVDMEISIGDYVLSGGELGAAVLVDVVTRLQDGVLNDAESAAQDSFEGPQGLLDCPHYSHPSSHAWGDVPEVLRSGNHGAIARWRRQQSLGRTWLRRPELLDEATLDKQDRRLLEEFRRELAPGDEK.

S-adenosyl-L-methionine is bound by residues Gly113 and 133-138 (IGDYVL).

The protein belongs to the RNA methyltransferase TrmD family. In terms of assembly, homodimer.

The protein resides in the cytoplasm. The enzyme catalyses guanosine(37) in tRNA + S-adenosyl-L-methionine = N(1)-methylguanosine(37) in tRNA + S-adenosyl-L-homocysteine + H(+). In terms of biological role, specifically methylates guanosine-37 in various tRNAs. This is tRNA (guanine-N(1)-)-methyltransferase from Xanthomonas campestris pv. campestris (strain B100).